A 179-amino-acid chain; its full sequence is MNIIQQLEAEQAAKIEAKRTLPEFSPGDTVRVNVKVTEGTRTRVQAYEGVCIARSGGGLQENFTVRKISYGEGVERVFPIYSPMIESVDVVRRGKVRRAKLYYLRDRRGKSARIVEDTGVRARKLNDAERAAIAEEKARIEAEKVAAAQALAAEKAAADAAEAKAAAEAAAAAAEPAAE.

This sequence belongs to the bacterial ribosomal protein bL19 family.

This protein is located at the 30S-50S ribosomal subunit interface and may play a role in the structure and function of the aminoacyl-tRNA binding site. In Rhizobium johnstonii (strain DSM 114642 / LMG 32736 / 3841) (Rhizobium leguminosarum bv. viciae), this protein is Large ribosomal subunit protein bL19.